We begin with the raw amino-acid sequence, 261 residues long: Proteasome subunit alpha (261 aa).

Positions 242–261 are disordered; sequence NEENKKEEENREETKEKQEE.

This sequence belongs to the peptidase T1A family. As to quaternary structure, the 20S proteasome core is composed of 14 alpha and 14 beta subunits that assemble into four stacked heptameric rings, resulting in a barrel-shaped structure. The two inner rings, each composed of seven catalytic beta subunits, are sandwiched by two outer rings, each composed of seven alpha subunits. The catalytic chamber with the active sites is on the inside of the barrel. Has a gated structure, the ends of the cylinder being occluded by the N-termini of the alpha-subunits. Is capped at one or both ends by the proteasome regulatory ATPase, PAN.

The protein localises to the cytoplasm. With respect to regulation, the formation of the proteasomal ATPase PAN-20S proteasome complex, via the docking of the C-termini of PAN into the intersubunit pockets in the alpha-rings, triggers opening of the gate for substrate entry. Interconversion between the open-gate and close-gate conformations leads to a dynamic regulation of the 20S proteasome proteolysis activity. In terms of biological role, component of the proteasome core, a large protease complex with broad specificity involved in protein degradation. The M.jannaschii proteasome is able to cleave oligopeptides after Glu, Asp, Tyr, Phe, Trp, slightly after Arg, but not after Ala. Thus, displays caspase-like and chymotrypsin-like activities and low level of trypsin-like activity. The chain is Proteasome subunit alpha from Methanocaldococcus jannaschii (strain ATCC 43067 / DSM 2661 / JAL-1 / JCM 10045 / NBRC 100440) (Methanococcus jannaschii).